A 422-amino-acid polypeptide reads, in one-letter code: Immunoglobulin mu Fc receptor (422 aa).

The signal sequence occupies residues 1 to 16 (MDFWLWLLYFLPVSGA). The Extracellular segment spans residues 18-262 (RVLPEVQLNV…DRGLHIPIPE (245 aa)). Residues 24–121 (QLNVEWGGSI…GKTQKITLNV (98 aa)) enclose the Ig-like domain. Disulfide bonds link Cys-37-Cys-103 and Cys-49-Cys-58. At Thr-91 the chain carries Phosphothreonine. A helical transmembrane segment spans residues 263-283 (FHILIPTFLGFLLLVLLGLVV). The Cytoplasmic portion of the chain corresponds to 284-422 (KRAIQRRRAS…YAPGPRSSCP (139 aa)). Residues 290-308 (RRASSRRAGRLAMRRRGRG) show a composition bias toward basic residues. Disordered regions lie at residues 290-367 (RRAS…QVLE) and 391-422 (VNLE…SSCP). Over residues 344-363 (LGPAEAPLLNAPASASPASP) the composition is skewed to low complexity.

As to quaternary structure, interacts (via Ig-like domain) with IGHM (via CH4/Cmu4 domain), both secreted and membrane-bound IgM; the interaction is glycan-independent and multivalent theoretically involving up to eight binding sites for the IgM pentamer. Post-translationally, phosphorylated on both Tyr and Ser residues. O-glycosylated. Sialylated. O-linked glycans regulate trafficking to the plasma membrane. In terms of tissue distribution, expressed in pre-B cells, immature and mature B cells residing in primary and secondary lymphoid organs (at protein level). In the spleen, highly expressed in follicular and marginal zone B cells and at lower levels in germinal center B cells and plasma cells. Expressed in splenic dendritic cells and in granulocytes. In the peritoneum, expressed in B1-a and B-2 cell lineages. In the bone marrow, expressed in immature B cells and at a lower level in pro- and pre-B cells (at protein level). Expressed in M cells (at protein level).

The protein localises to the cell membrane. It localises to the early endosome membrane. It is found in the golgi apparatus. Its subcellular location is the trans-Golgi network membrane. The protein resides in the lysosome membrane. In terms of biological role, high-affinity Fc receptor for immunoglobulin M (IgM), both secreted and membrane-bound IgM. Primarily regulates IgM transport and homeostasis. In lymphoid cells, enables exocytosis of membrane-bound IgM on the plasma membrane as well as endocytosis of IgM-antigen complexes toward lysosomes for degradation. In mucosal epithelium, mediates retrotranscytosis of antigen-IgM complexes across mucosal M cells toward antigen-presenting cells in mucosal lymphoid tissues. Triggers costimulatory signaling and mediates most of IgM effector functions involved in B cell development and primary immune response to infection. Likely limits tonic IgM BCR signaling to self-antigens for proper negative selection of autoreactive B cells in the bone marrow and for the maintenance of regulatory B cell pool in peripheral lymphoid organs. Mediates antibody responses to T cell-dependent and T cell-independent antigens and promotes induction of an efficient neutralizing IgG response. Engages in cross-talk with antigen-receptor signaling via the non-canonical NF-kappa-B, MAP kinases and calcium signaling pathways. The protein is Immunoglobulin mu Fc receptor of Mus musculus (Mouse).